The sequence spans 129 residues: Fluoride-specific ion channel FluC 2 (129 aa).

The next 4 helical transmembrane spans lie at 3 to 23, 32 to 52, 59 to 79, and 90 to 110; these read FLYV…MNLW, ATLA…QFLA, LVIL…FSAF, and GAWL…LIMV. Na(+)-binding residues include G71 and T74.

This sequence belongs to the fluoride channel Fluc/FEX (TC 1.A.43) family.

It localises to the cell membrane. The catalysed reaction is fluoride(in) = fluoride(out). Na(+) is not transported, but it plays an essential structural role and its presence is essential for fluoride channel function. Fluoride-specific ion channel. Important for reducing fluoride concentration in the cell, thus reducing its toxicity. In Listeria monocytogenes serotype 4b (strain F2365), this protein is Fluoride-specific ion channel FluC 2.